Here is a 382-residue protein sequence, read N- to C-terminus: Queuine tRNA-ribosyltransferase (382 aa).

D93 functions as the Proton acceptor in the catalytic mechanism. Substrate-binding positions include 93–97 (DSGGF), D147, Q191, and G218. The tract at residues 249-255 (GVGKPED) is RNA binding. Catalysis depends on D268, which acts as the Nucleophile. The interval 273–277 (TRNAR) is RNA binding; important for wobble base 34 recognition. Positions 306, 308, 311, and 337 each coordinate Zn(2+).

It belongs to the queuine tRNA-ribosyltransferase family. Homodimer. Within each dimer, one monomer is responsible for RNA recognition and catalysis, while the other monomer binds to the replacement base PreQ1. Zn(2+) is required as a cofactor.

It carries out the reaction 7-aminomethyl-7-carbaguanine + guanosine(34) in tRNA = 7-aminomethyl-7-carbaguanosine(34) in tRNA + guanine. Its pathway is tRNA modification; tRNA-queuosine biosynthesis. In terms of biological role, catalyzes the base-exchange of a guanine (G) residue with the queuine precursor 7-aminomethyl-7-deazaguanine (PreQ1) at position 34 (anticodon wobble position) in tRNAs with GU(N) anticodons (tRNA-Asp, -Asn, -His and -Tyr). Catalysis occurs through a double-displacement mechanism. The nucleophile active site attacks the C1' of nucleotide 34 to detach the guanine base from the RNA, forming a covalent enzyme-RNA intermediate. The proton acceptor active site deprotonates the incoming PreQ1, allowing a nucleophilic attack on the C1' of the ribose to form the product. After dissociation, two additional enzymatic reactions on the tRNA convert PreQ1 to queuine (Q), resulting in the hypermodified nucleoside queuosine (7-(((4,5-cis-dihydroxy-2-cyclopenten-1-yl)amino)methyl)-7-deazaguanosine). The chain is Queuine tRNA-ribosyltransferase from Actinobacillus pleuropneumoniae serotype 5b (strain L20).